A 996-amino-acid chain; its full sequence is Alanine--tRNA ligase, chloroplastic/mitochondrial (996 aa).

Zn(2+) is bound by residues H677, H681, C779, and H783.

This sequence belongs to the class-II aminoacyl-tRNA synthetase family. Monomer. Zn(2+) is required as a cofactor.

The protein resides in the plastid. Its subcellular location is the chloroplast. It is found in the mitochondrion. It carries out the reaction tRNA(Ala) + L-alanine + ATP = L-alanyl-tRNA(Ala) + AMP + diphosphate. Its function is as follows. Catalyzes the attachment of alanine to tRNA(Ala) in a two-step reaction: alanine is first activated by ATP to form Ala-AMP and then transferred to the acceptor end of tRNA(Ala). Also edits incorrectly charged tRNA(Ala) via its editing domain. The polypeptide is Alanine--tRNA ligase, chloroplastic/mitochondrial (Oryza sativa subsp. indica (Rice)).